Here is an 801-residue protein sequence, read N- to C-terminus: Mediator of RNA polymerase II transcription subunit 25 (801 aa).

Composition is skewed to low complexity over residues 647–676 (PQQL…QPGA), 687–710 (PQLR…QQPL), and 722–735 (PHQA…HQAP). The interval 647-735 (PQQLASQAPP…MGQQMQHQAP (89 aa)) is disordered. An LXXLL motif motif is present at residues 689 to 693 (LRNLL).

Belongs to the Mediator complex subunit 25 family. As to quaternary structure, component of the Mediator complex.

It localises to the nucleus. Component of the Mediator complex, a coactivator involved in the regulated transcription of nearly all RNA polymerase II-dependent genes. Mediator functions as a bridge to convey information from gene-specific regulatory proteins to the basal RNA polymerase II transcription machinery. Mediator is recruited to promoters by direct interactions with regulatory proteins and serves as a scaffold for the assembly of a functional preinitiation complex with RNA polymerase II and the general transcription factors. This chain is Mediator of RNA polymerase II transcription subunit 25 (med25), found in Xenopus laevis (African clawed frog).